The sequence spans 400 residues: Snake venom metalloproteinase H3 (400 aa).

The signal sequence occupies residues Phe-1 to Ser-6. Residues Ser-7–Thr-176 constitute a propeptide that is removed on maturation. The Peptidase M12B domain occupies Lys-180–Pro-377. Positions 183 and 267 each coordinate Ca(2+). Intrachain disulfides connect Cys-291–Cys-372, Cys-331–Cys-356, and Cys-333–Cys-339. His-316 serves as a coordination point for Zn(2+). The active site involves Glu-317. Zn(2+)-binding residues include His-320 and His-326. The Ca(2+) site is built by Cys-372, Asn-375, Val-387, Asn-390, Leu-392, Glu-394, and Asp-400. Residues Leu-378–Asp-400 constitute a propeptide that is removed on maturation.

Belongs to the venom metalloproteinase (M12B) family. P-I subfamily. As to quaternary structure, monomer. It depends on Zn(2+) as a cofactor. In terms of tissue distribution, expressed by the venom gland.

Its subcellular location is the secreted. Its function is as follows. Snake venom metalloproteinase that impairs hemostasis in the envenomed animal. In Deinagkistrodon acutus (Hundred-pace snake), this protein is Snake venom metalloproteinase H3.